A 412-amino-acid polypeptide reads, in one-letter code: Cathepsin D (412 aa).

Positions Met1–Ala20 are cleaved as a signal peptide. Positions Leu21–Glu64 are cleaved as a propeptide — activation peptide. O-linked (GalNAc...) threonine glycosylation occurs at Thr63. One can recognise a Peptidase A1 domain in the interval Tyr79–Ala407. 2 disulfide bridges follow: Cys91-Cys160 and Cys110-Cys117. Residue Asp97 is part of the active site. Asn134 and Asn263 each carry an N-linked (GlcNAc...) asparagine glycan. Cysteines 286 and 290 form a disulfide. Residue Asp295 is part of the active site. An intrachain disulfide couples Cys329 to Cys366.

The protein belongs to the peptidase A1 family. In terms of assembly, consists of a light chain and a heavy chain. Interacts with ADAM30; this leads to activation of CTSD. Interacts with GRN; stabilizes CTSD; increases its proteolytic activity. N- and O-glycosylated. Post-translationally, undergoes proteolytic cleavage and activation by ADAM30. In terms of processing, as well as the major heavy chain which starts at Leu-169, 2 minor forms starting at Gly-170 and Gly-171 have been identified. An additional form starting at Ala-168 has also been identified. As to expression, expressed in the aorta extracellular space (at protein level). Expressed in liver (at protein level).

Its subcellular location is the lysosome. It is found in the melanosome. The protein resides in the secreted. The protein localises to the extracellular space. The enzyme catalyses Specificity similar to, but narrower than, that of pepsin A. Does not cleave the 4-Gln-|-His-5 bond in B chain of insulin.. In terms of biological role, acid protease active in intracellular protein breakdown. Plays a role in APP processing following cleavage and activation by ADAM30 which leads to APP degradation. Involved in the pathogenesis of several diseases such as breast cancer and possibly Alzheimer disease. The chain is Cathepsin D (CTSD) from Homo sapiens (Human).